A 612-amino-acid polypeptide reads, in one-letter code: Dihydroxy-acid dehydratase (612 aa).

Asp81 is a Mg(2+) binding site. Residue Cys122 participates in [2Fe-2S] cluster binding. Mg(2+)-binding residues include Asp123 and Lys124. Lys124 carries the post-translational modification N6-carboxylysine. Cys193 provides a ligand contact to [2Fe-2S] cluster. Position 489 (Glu489) interacts with Mg(2+). The active-site Proton acceptor is Ser515.

It belongs to the IlvD/Edd family. As to quaternary structure, homodimer. Requires [2Fe-2S] cluster as cofactor. Mg(2+) is required as a cofactor.

The enzyme catalyses (2R)-2,3-dihydroxy-3-methylbutanoate = 3-methyl-2-oxobutanoate + H2O. The catalysed reaction is (2R,3R)-2,3-dihydroxy-3-methylpentanoate = (S)-3-methyl-2-oxopentanoate + H2O. It participates in amino-acid biosynthesis; L-isoleucine biosynthesis; L-isoleucine from 2-oxobutanoate: step 3/4. It functions in the pathway amino-acid biosynthesis; L-valine biosynthesis; L-valine from pyruvate: step 3/4. Its function is as follows. Functions in the biosynthesis of branched-chain amino acids. Catalyzes the dehydration of (2R,3R)-2,3-dihydroxy-3-methylpentanoate (2,3-dihydroxy-3-methylvalerate) into 2-oxo-3-methylpentanoate (2-oxo-3-methylvalerate) and of (2R)-2,3-dihydroxy-3-methylbutanoate (2,3-dihydroxyisovalerate) into 2-oxo-3-methylbutanoate (2-oxoisovalerate), the penultimate precursor to L-isoleucine and L-valine, respectively. The protein is Dihydroxy-acid dehydratase of Stutzerimonas stutzeri (strain A1501) (Pseudomonas stutzeri).